Reading from the N-terminus, the 414-residue chain is Enterobactin exporter EntS (414 aa).

At 1–21 (MNRQSWLLNLSLLKTHPAFRA) the chain is on the cytoplasmic side. A helical membrane pass occupies residues 22–42 (VFLARFISIVSLGLLGVAVPV). The Periplasmic segment spans residues 43–55 (QIQMMTHSTWQVG). The chain crosses the membrane as a helical span at residues 56–76 (LSVTLTGGAMFIGLMVGGVLA). The Cytoplasmic portion of the chain corresponds to 77–83 (DRYERKK). The helical transmembrane segment at 84 to 104 (VILLARGTCGIGFIGLCVNAL) threads the bilayer. Over 105 to 109 (LPEPS) the chain is Periplasmic. The chain crosses the membrane as a helical span at residues 110–130 (LLAIYLLGLWDGFFASLGVTA). Topologically, residues 131–156 (LLAATPALVGRENLMQAGAITMLTVR) are cytoplasmic. Residues 157-177 (LGSVISPMLGGILLASGGVAW) form a helical membrane-spanning segment. A topological domain (periplasmic) is located at residue asparagine 178. The helical transmembrane segment at 179–199 (YGLAAAGTFITLLPLLTLPRL) threads the bilayer. The Cytoplasmic segment spans residues 200–218 (PVPPQPRENPFIALLAAFR). A helical transmembrane segment spans residues 219-239 (FLLASPLIGGIALLGGLVTMA). Residues 240 to 256 (SAVRVLYPALAMSWQMS) lie on the Periplasmic side of the membrane. Residues 257 to 277 (AAQIGLLYAAIPLGAAIGALT) form a helical membrane-spanning segment. Topologically, residues 278 to 287 (SGQLAHSVRP) are cytoplasmic. Residues 288 to 307 (GLIMLVSTVGSFLAVGLFAI) traverse the membrane as a helical segment. Residues 308-313 (MPIWIA) lie on the Periplasmic side of the membrane. Residues 314–336 (GVICLALFGWLSAISSLLQYTLL) form a helical membrane-spanning segment. Over 337 to 356 (QTQTPENMLGRMNGLWTAQN) the chain is Cytoplasmic. The chain crosses the membrane as a helical span at residues 357–377 (VTGDAIGAALLGGLGAMMTPV). Alanine 378 is a topological domain (periplasmic). The helical transmembrane segment at 379-399 (SASVSGFGLVIIGLLLLLVLG) threads the bilayer. Over 400–414 (ELRRFRQTPPVSDAG) the chain is Cytoplasmic.

The protein belongs to the major facilitator superfamily. EntS (TC 2.A.1.38) family.

It is found in the cell inner membrane. Its function is as follows. Component of an export pathway for enterobactin. In Salmonella typhi, this protein is Enterobactin exporter EntS.